Consider the following 348-residue polypeptide: MTAQPQTLKIRRPDDWHIHLRDDEMLSTVLPYTSEVFARAIVMPNLAQPITTVASAIAYRERILAAVPAGHKFTPLMTCYLTNSLDAKELTTGFEQGVFTAAKLYPANATTNSTHGVSDIPAIYPLFEQMQKIGMPLLIHGEVTDAAVDIFDREARFIDQILEPIRQKFPELKIVFEHITTKDAADYVLAGNRFLGATVTPQHLMFNRNHMLVGGIRPHLFCLPILKRSTHQQALRAAVASGSDRFFLGTDSAPHAKHRKESSCGCAGVFNAPAALPAYASVFEELNALQHLEAFCALNGPRFYGLPVNDDVVELVRTPFLQPEEIPLGNESVIPFLAGQTLNWSVKR.

Positions 17 and 19 each coordinate Zn(2+). Residues 19 to 21 (HLR) and Asn45 each bind substrate. Residues Lys103, His140, and His178 each contribute to the Zn(2+) site. Lys103 bears the N6-carboxylysine mark. His140 is a binding site for substrate. Position 223 (Leu223) interacts with substrate. Residue Asp251 coordinates Zn(2+). The active site involves Asp251. The substrate site is built by His255 and Ala267.

It belongs to the metallo-dependent hydrolases superfamily. DHOase family. Class II DHOase subfamily. In terms of assembly, homodimer. Requires Zn(2+) as cofactor.

The enzyme catalyses (S)-dihydroorotate + H2O = N-carbamoyl-L-aspartate + H(+). It participates in pyrimidine metabolism; UMP biosynthesis via de novo pathway; (S)-dihydroorotate from bicarbonate: step 3/3. Functionally, catalyzes the reversible cyclization of carbamoyl aspartate to dihydroorotate. This chain is Dihydroorotase, found in Yersinia pestis.